The primary structure comprises 379 residues: Cytochrome b (379 aa).

The next 4 membrane-spanning stretches (helical) occupy residues 33–53 (FGSL…FLAM), 77–98 (WLIR…YLHI), 113–133 (WNIG…GYVL), and 178–198 (FFTF…LHLL). The heme b site is built by His-83 and His-97. Heme b contacts are provided by His-182 and His-196. Position 201 (His-201) interacts with a ubiquinone. Transmembrane regions (helical) follow at residues 226 to 246 (YKDL…VLFS), 288 to 308 (LGGV…PLLH), 320 to 340 (FSQT…WIGG), and 347 to 367 (FIII…VVMP).

The protein belongs to the cytochrome b family. The cytochrome bc1 complex contains 3 respiratory subunits (MT-CYB, CYC1 and UQCRFS1), 2 core proteins (UQCRC1 and UQCRC2) and probably 6 low-molecular weight proteins. The cofactor is heme b.

The protein resides in the mitochondrion inner membrane. Functionally, component of the ubiquinol-cytochrome c reductase complex (complex III or cytochrome b-c1 complex) that is part of the mitochondrial respiratory chain. The b-c1 complex mediates electron transfer from ubiquinol to cytochrome c. Contributes to the generation of a proton gradient across the mitochondrial membrane that is then used for ATP synthesis. The polypeptide is Cytochrome b (MT-CYB) (Iguana iguana (Common iguana)).